The chain runs to 381 residues: Phthiodiolone/phenolphthiodiolone dimycocerosates ketoreductase (381 aa).

The protein belongs to the mer family. Phthiodiolone/phenolphthiodiolone dimycocerosates ketoreductase subfamily.

Catalyzes the reduction of the keto moiety of phthiodiolone dimycocerosates (DIM B) and glycosylated phenolphthiodiolone dimycocerosates to form the intermediate compounds phthiotriol and glycosylated phenolphthiotriol dimycocerosates during phthiocerol dimycocerosates (DIM A) and glycosylated phenolphthiocerol dimycocerosates (PGL) biosynthesis. The chain is Phthiodiolone/phenolphthiodiolone dimycocerosates ketoreductase from Mycobacterium bovis (strain ATCC BAA-935 / AF2122/97).